Reading from the N-terminus, the 89-residue chain is uncharacterized protein (89 aa).

This is an uncharacterized protein from Escherichia coli (strain K12).